The following is a 1045-amino-acid chain: MEAKVRPSRRSRAQRDRGRRREAARDARAQSPSSGDEPEPSPGKENAGLRGAPPRGAAPAPRTARPPRRRRRESSSQEEEVIDGFAIASFSTLEALEKDMALKPHERKEKWERRLIKKPRESETCPPAEPSENRRPLEAGSPGQDLEPACDGARKVPLQPSKQMKVTVSKGGDRDSDDDSVLEATSSRDPLSDSSAHAVSGRGYSCDSESGPDDKASVGSEKLFAPGTDKGPALEKSEAKAGPVPKVSGLERSRELSAESFLPTASPAPHAAPCPGPPPGSRANPLVKKEPPAPHRHTPQPPPPQPRGLLPTHVPASLGAFAGHSQAAANGLHGLSRSSSAPLGLGKHVSLSPHGPGPHLSTSHLALRSQAQHQLHAAMFAAPPTLPPPPALPASSLVLPGHPADHELLRQELNTRFLVQSAERPGASLGPGALLRAEFHQHQHTHQHTHQHTHQHQHTFAPFPAGLPPTPPAAPPPFDKYAPKLDSPYFRHSSVSFFPSFPPAIPGLPTLLPHPGPFGSLQGAFQPKVSDPYRAVVKVSTCWEGPWQGRTLVPPGRPRGARDSRSLQKTWVGVAPAPLSASILSQKPGRWCAVHVQIAWQIYRHQQKIKEMQLDPHKLEVGAKLDLFGRPPAPGVFAGFHYPQDLARPLFPSTGAAHPASNPFGPSAHPGSFLPTGPLTDPFSRPSTFGGLGSLSSHAFGGLGSHALAPGGSIFAPKEGSSVHGLPSPHEAWNRLHRAPPSFPAPPPWPKSVDAERVSALTNHDREPDNGKEEQERDLLEKTRLLSRASPATPAGHPVSGLLLRAQSELGRSGAPAEREAEPRVKESRSPAKEEAAKMPARASPPHSKAAPGDVKVKEERGEDEASEPPAGGLHPAPLQLGLGRERLGAPGFAWEPFRGLELPRRAFPAAAPAPGSAALLEPPERPYRDREPHGYSPERLRGELERARAPHLPPAAPALDGALLPSLGALHFPRLSPAALHNGLLARTPPAAAALGAPPPLVTAAGPPTPPGPPRSRTTPLGGLGPGEARDYSPSRNPPEVEAR.

Residues 1-12 (MEAKVRPSRRSR) show a composition bias toward basic residues. 2 disordered regions span residues 1 to 86 (MEAK…DGFA) and 99 to 315 (DMAL…THVP). The segment covering 13–28 (AQRDRGRRREAARDAR) has biased composition (basic and acidic residues). The segment covering 48 to 63 (GLRGAPPRGAAPAPRT) has biased composition (low complexity). The segment covering 99–123 (DMALKPHERKEKWERRLIKKPRESE) has biased composition (basic and acidic residues). Positions 183–197 (EATSSRDPLSDSSAH) are enriched in polar residues. Residues 270-280 (HAAPCPGPPPG) show a composition bias toward pro residues. Residue Ser340 is modified to Phosphoserine. The span at 443 to 457 (QHTHQHTHQHTHQHQ) shows a compositional bias: basic residues. Disordered stretches follow at residues 443–462 (QHTH…TFAP) and 719–753 (EGSS…PKSV). Residues 741-750 (PSFPAPPPWP) are compositionally biased toward pro residues. Ser790 bears the Phosphoserine mark. 2 disordered regions span residues 809–880 (ELGR…APLQ) and 910–961 (AAAP…PALD). Positions 817-837 (AEREAEPRVKESRSPAKEEAA) are enriched in basic and acidic residues. Residue Lys858 forms a Glycyl lysine isopeptide (Lys-Gly) (interchain with G-Cter in SUMO2) linkage. The span at 910–922 (AAAPAPGSAALLE) shows a compositional bias: low complexity. Residues 923 to 949 (PPERPYRDREPHGYSPERLRGELERAR) show a composition bias toward basic and acidic residues. Phosphoserine is present on residues Ser937 and Ser977. Phosphothreonine is present on residues Thr989 and Thr1010. The tract at residues 991–1045 (PAAAALGAPPPLVTAAGPPTPPGPPRSRTTPLGGLGPGEARDYSPSRNPPEVEAR) is disordered. The span at 998 to 1015 (APPPLVTAAGPPTPPGPP) shows a compositional bias: pro residues. The span at 1029-1045 (EARDYSPSRNPPEVEAR) shows a compositional bias: basic and acidic residues.

This sequence belongs to the AUTS2 family.

In Homo sapiens (Human), this protein is Fibrosin-1-like protein (FBRSL1).